We begin with the raw amino-acid sequence, 103 residues long: Large ribosomal subunit protein bL21 (103 aa).

Belongs to the bacterial ribosomal protein bL21 family. In terms of assembly, part of the 50S ribosomal subunit. Contacts protein L20.

This protein binds to 23S rRNA in the presence of protein L20. This Paraburkholderia phymatum (strain DSM 17167 / CIP 108236 / LMG 21445 / STM815) (Burkholderia phymatum) protein is Large ribosomal subunit protein bL21.